A 415-amino-acid chain; its full sequence is uncharacterized protein (415 aa).

In terms of domain architecture, TRAM spans 1–55 (MSTGTVTIDRLGAQGDGVARTEAGPVFAPFTLPGETVSLAVNKANGTLISLKEAS). [4Fe-4S] cluster-binding residues include C63, C75, C78, and C152. 4 residues coordinate S-adenosyl-L-methionine: Q252, F279, E299, and D347. The active-site Nucleophile is the C373.

Belongs to the class I-like SAM-binding methyltransferase superfamily. RNA M5U methyltransferase family.

This is an uncharacterized protein from Rhizobium meliloti (strain 1021) (Ensifer meliloti).